Consider the following 476-residue polypeptide: FAD-dependent monooxygenase ausM (476 aa).

The FAD site is built by E41, G55, and R114. The active site involves Y222. FAD contacts are provided by D314 and A327. The chain crosses the membrane as a helical span at residues L447–Y467.

It belongs to the paxM FAD-dependent monooxygenase family. Requires FAD as cofactor.

It localises to the membrane. It functions in the pathway secondary metabolite biosynthesis; terpenoid biosynthesis. Functionally, FAD-dependent monooxygenase; part of the gene cluster A that mediates the biosynthesis of the fungal meroterpenoid acetoxydehydroaustin. The first step of the pathway is the synthesis of 3,5-dimethylorsellinic acid by the polyketide synthase ausA. 3,5-dimethylorsellinic acid is then prenylated by the polyprenyl transferase ausN. Further epoxidation by the FAD-dependent monooxygenase ausM and cyclization by the probable terpene cyclase ausL lead to the formation of protoaustinoid A. Protoaustinoid A is then oxidized to spiro-lactone preaustinoid A3 by the combined action of the FAD-binding monooxygenases ausB and ausC, and the dioxygenase ausE. Acid-catalyzed keto-rearrangement and ring contraction of the tetraketide portion of preaustinoid A3 by ausJ lead to the formation of preaustinoid A4. The aldo-keto reductase ausK, with the help of ausH, is involved in the next step by transforming preaustinoid A4 into isoaustinone which is in turn hydroxylated by the P450 monooxygenase ausI to form austinolide. The cytochrome P450 monooxygenase ausG then modifies austinolide to austinol. Austinol is further acetylated to austin by the O-acetyltransferase ausP, which spontaneously changes to dehydroaustin. The cytochrome P450 monooxygenase then converts dehydroaustin is into 7-dehydrodehydroaustin. The hydroxylation catalyzed by ausR permits the second O-acetyltransferase ausQ to add an additional acetyl group to the molecule, leading to the formation of acetoxydehydroaustin. Due to genetic rearrangements of the clusters and the subsequent loss of some enzymes, the end product of the Penicillium brasilianum austinoid biosynthesis clusters is acetoxydehydroaustin. In Penicillium brasilianum, this protein is FAD-dependent monooxygenase ausM.